Here is a 266-residue protein sequence, read N- to C-terminus: Phosphate import ATP-binding protein PstB 1 (266 aa).

Residues 21-261 (ISTQDLSVFY…PKGEITEDYI (241 aa)) enclose the ABC transporter domain. 54-61 (GGSGSGKS) contributes to the ATP binding site.

It belongs to the ABC transporter superfamily. Phosphate importer (TC 3.A.1.7) family. As to quaternary structure, the complex is composed of two ATP-binding proteins (PstB), two transmembrane proteins (PstC and PstA) and a solute-binding protein (PstS).

The protein resides in the cell membrane. The enzyme catalyses phosphate(out) + ATP + H2O = ADP + 2 phosphate(in) + H(+). Its function is as follows. Part of the ABC transporter complex PstSACB involved in phosphate import. Responsible for energy coupling to the transport system. The sequence is that of Phosphate import ATP-binding protein PstB 1 from Lactobacillus johnsonii (strain CNCM I-12250 / La1 / NCC 533).